The primary structure comprises 85 residues: Small ribosomal subunit protein bS18c (85 aa).

Belongs to the bacterial ribosomal protein bS18 family. Part of the 30S ribosomal subunit.

It is found in the plastid. The protein localises to the chloroplast. This chain is Small ribosomal subunit protein bS18c, found in Zygnema circumcarinatum (Green alga).